A 185-amino-acid polypeptide reads, in one-letter code: Elongation factor P (185 aa).

Belongs to the elongation factor P family.

Its subcellular location is the cytoplasm. Its pathway is protein biosynthesis; polypeptide chain elongation. Involved in peptide bond synthesis. Stimulates efficient translation and peptide-bond synthesis on native or reconstituted 70S ribosomes in vitro. Probably functions indirectly by altering the affinity of the ribosome for aminoacyl-tRNA, thus increasing their reactivity as acceptors for peptidyl transferase. In Pelotomaculum thermopropionicum (strain DSM 13744 / JCM 10971 / SI), this protein is Elongation factor P.